The following is a 1936-amino-acid chain: Potassium channel K1 (1936 aa).

Helical transmembrane passes span 175 to 195, 598 to 618, 643 to 663, 670 to 690, 701 to 721, and 734 to 754; these read IIIL…YILL, VWII…LWAA, GYIE…GLYF, YIFS…SFIM, TYWF…AEST, and IIII…SGIM. The pore-forming intramembrane region spans 772–788; sequence FVYFGVITMSTVGYGDY. The helical transmembrane segment at 791–811 threads the bilayer; it reads VTPAGKCLTMFIIVTCFTFVG. Positions 1141-1185 form a coiled coil; sequence DTSSMINYKSKSRVNYKMVKGTKNEFIRNQNYNINSIYYANNDNM.

The protein localises to the membrane. The enzyme catalyses K(+)(in) = K(+)(out). Its activity is regulated as follows. Partially inhibited by Ba(2+) and quinine. Probably insensitive to tetraethylammonium (TEA). Functionally, likely a predominant potassium channel in the erythrocytic stages of parasites. Mediates transmembrane potassium transport. Required for the development of oocysts in the mosquito midgut. The protein is Potassium channel K1 of Plasmodium berghei (strain Anka).